A 139-amino-acid polypeptide reads, in one-letter code: Trafficking protein particle complex subunit 2-like protein (139 aa).

The protein belongs to the TRAPP small subunits family. Sedlin subfamily.

The protein resides in the cytoplasm. The protein localises to the perinuclear region. It localises to the endoplasmic reticulum. It is found in the golgi apparatus. In terms of biological role, may play a role in vesicular transport from endoplasmic reticulum to Golgi. The protein is Trafficking protein particle complex subunit 2-like protein (trappc2l) of Xenopus tropicalis (Western clawed frog).